The following is a 350-amino-acid chain: Nicotinate-nucleotide--dimethylbenzimidazole phosphoribosyltransferase (350 aa).

The active-site Proton acceptor is the glutamate 317.

Belongs to the CobT family.

The catalysed reaction is 5,6-dimethylbenzimidazole + nicotinate beta-D-ribonucleotide = alpha-ribazole 5'-phosphate + nicotinate + H(+). It functions in the pathway nucleoside biosynthesis; alpha-ribazole biosynthesis; alpha-ribazole from 5,6-dimethylbenzimidazole: step 1/2. Its function is as follows. Catalyzes the synthesis of alpha-ribazole-5'-phosphate from nicotinate mononucleotide (NAMN) and 5,6-dimethylbenzimidazole (DMB). This Shewanella sp. (strain W3-18-1) protein is Nicotinate-nucleotide--dimethylbenzimidazole phosphoribosyltransferase.